We begin with the raw amino-acid sequence, 374 residues long: Aminodeoxychorismate lyase (374 aa).

Belongs to the class-IV pyridoxal-phosphate-dependent aminotransferase family. Homodimer. Pyridoxal 5'-phosphate serves as cofactor.

It is found in the cytoplasm. It carries out the reaction 4-amino-4-deoxychorismate = 4-aminobenzoate + pyruvate + H(+). It participates in cofactor biosynthesis; tetrahydrofolate biosynthesis; 4-aminobenzoate from chorismate: step 2/2. Functionally, converts 4-amino-4-deoxychorismate into 4-aminobenzoate (PABA) and pyruvate. In Saccharomyces cerevisiae (strain ATCC 204508 / S288c) (Baker's yeast), this protein is Aminodeoxychorismate lyase (ABZ2).